We begin with the raw amino-acid sequence, 518 residues long: Cytochrome P450 709B3 (518 aa).

The chain crosses the membrane as a helical span at residues 3 to 23 (LISTINLLTIVLLLFVVSKIW). Cys465 contributes to the heme binding site.

This sequence belongs to the cytochrome P450 family. Heme is required as a cofactor. Highly expressed in rosette leaves and siliques, and at lower levels in flowers.

The protein localises to the membrane. In terms of biological role, plays a role in abscisic acid (ABA) and salt stress response. May regulate the salt stress response independently of well-characterized pathways. Does not function as cytokinin hydroxylase in yeast heterologous system. In Arabidopsis thaliana (Mouse-ear cress), this protein is Cytochrome P450 709B3.